The primary structure comprises 742 residues: Vesicle-fusing ATPase (742 aa).

Residues 499–504 and 539–546 each bind ATP; these read NGMVDC and SGSGKTAL. Mg(2+) is bound at residue Thr544.

Belongs to the AAA ATPase family. As to quaternary structure, homohexamer. Binds to SNARE-SNAP complexes to form 20S particles. Mg(2+) is required as a cofactor.

Its subcellular location is the cytoplasm. It catalyses the reaction ATP + H2O = ADP + phosphate + H(+). Required for vesicle-mediated transport. Catalyzes the fusion of transport vesicles within the Golgi cisternae. Is also required for transport from the endoplasmic reticulum to the Golgi stack. Seems to function as a fusion protein required for the delivery of cargo proteins to all compartments of the Golgi stack independent of vesicle origin. Required for maintaining the normal morphology of the Golgi apparatus. In Arabidopsis thaliana (Mouse-ear cress), this protein is Vesicle-fusing ATPase.